The sequence spans 219 residues: Large ribosomal subunit protein bL25 (219 aa).

Positions 176–219 (VTVVPPTDEPSEEEVEAMEGESATEEPEVVGEDKEDDEEENKED) are disordered. The span at 184-219 (EPSEEEVEAMEGESATEEPEVVGEDKEDDEEENKED) shows a compositional bias: acidic residues.

It belongs to the bacterial ribosomal protein bL25 family. CTC subfamily. As to quaternary structure, part of the 50S ribosomal subunit; part of the 5S rRNA/L5/L18/L25 subcomplex. Contacts the 5S rRNA. Binds to the 5S rRNA independently of L5 and L18.

Functionally, this is one of the proteins that binds to the 5S RNA in the ribosome where it forms part of the central protuberance. In Staphylococcus epidermidis (strain ATCC 35984 / DSM 28319 / BCRC 17069 / CCUG 31568 / BM 3577 / RP62A), this protein is Large ribosomal subunit protein bL25.